The primary structure comprises 410 residues: Demethyl-4-deoxygadusol synthase (410 aa).

Residues 56–58 (DAN), 87–90 (EPDK), 119–123 (GLITD), 143–144 (TT), K156, K165, and 183–186 (LLRT) contribute to the NAD(+) site. 3 residues coordinate Zn(2+): E198, H271, and H287.

This sequence belongs to the sugar phosphate cyclases superfamily. DDGS family. As to quaternary structure, homodimer. The cofactor is NAD(+). Requires Co(2+) as cofactor. Zn(2+) serves as cofactor.

The catalysed reaction is D-sedoheptulose 7-phosphate = (R)-demethyl-4-deoxygadusol + phosphate + H2O + H(+). In terms of biological role, catalyzes the conversion of sedoheptulose 7-phosphate to demethyl-4-deoxygadusol (DDG). Involved in the synthesis of the mycosporine-like amino acid shinorine, a natural sunscreen compound that protects the cell against UV radiation. This is Demethyl-4-deoxygadusol synthase from Trichormus variabilis (strain ATCC 29413 / PCC 7937) (Anabaena variabilis).